A 1004-amino-acid chain; its full sequence is MPTRNLLLGSILLSLAVKGDPGPHRGARCGVSPLGSATELNYLSRIVGGRESKKGQHPWTVSLKRNGKHFCGGTLVSHCHVLTAAHCLLDRNVKLYMRVYIGEYDQILKEETEQMFRVIEIFKHPNFNQSQPMNYDVAVLLLDGSVTFDENIQPACLPNPDDVFEPGDLCVTLGWGHLTENGILPVVLQEVYLPIVDLSSCLHVMSALKGTVVSSYIVCAGFPEGGKDACQGDSGGPLLCQRRHGSWVLHGLTSWGMGCGRSWKNNVFLPHNRKGSPGIFTDIQKLLGWVSSQLNTAVPNKNQESCSMQDGVLSGKSGELIFLKNPMSVTRTMSGAPGFSLSLKTCTSCLNFTHLDIESDFACNLDYLAIYTDSHRLIGKFCGDIPPRSLLISFSSIKLNFFSDFHENRTGFVLYYSAVEPNTYPDSGCGSFAVLFEEGEIQSMNYPENYLSNSRCHWIIHGPSGSYIKLQFEDFALEPSDDCRSDYLAVYQDLAAEDKIETFCGFSLPAPVYSTTAVMHIKFSTDERDNDKGFRATFTFVSPNSLVEDSRQGNMPSTNKKETTAQDSICGVSQVPPIFIYNSIAKVEEAVPHSWPWHTSLQYAGEHVCDGAIIAENWILTTASCVLNRKFNDVWLVDPGIHDLLRPGHNQKGLVKQIIPHPSFSSQTNDFDIALVELDESLQFNSDIFPICLPGKTSELAPASLCVVSGWSLRGKEAEKSTKLQQREVPILTDDACSAHYIQNPGGITDRMLCAGIGTGQDNDSCSEQSGSPLVCLLEKKGIYTIFGIASWGVNCKENSKPGIYTKVSPFIDWIRQIMSDTGQIHSNLGDPKPHPMGNIEPEETAGRDIIQGGFPTNDASSNQNLYIASSCEDVVLLQSPGEIKMETKSQMYPNGFSCQWRIIAPKFQIIKLVMKQVHMSAENGKCCNSLIIYEGISKNKTLKVRFPTDEMVPGTVWSEGSSVTIESPPHPVDPEFGFCLVYSFHSRTQSQDHVVPDSDSSEP.

Residues 1-19 form the signal peptide; the sequence is MPTRNLLLGSILLSLAVKG. Positions 20–45 are cleaved as a propeptide — activation peptide; the sequence is DPGPHRGARCGVSPLGSATELNYLSR. Residues 46 to 295 form the Peptidase S1 1 domain; it reads IVGGRESKKG…LLGWVSSQLN (250 aa). Cysteine 71 and cysteine 87 are oxidised to a cystine. The Charge relay system role is filled by histidine 86. Glutamate 113 lines the Ca(2+) pocket. Residue asparagine 128 is glycosylated (N-linked (GlcNAc...) asparagine). Aspartate 136 acts as the Charge relay system in catalysis. 3 disulfides stabilise this stretch: cysteine 170–cysteine 240, cysteine 201–cysteine 219, and cysteine 230–cysteine 259. Residue serine 234 is the Charge relay system of the active site. CUB domains lie at 309 to 419 and 429 to 541; these read QDGV…YSAV and CGSF…FTFV. A glycan (N-linked (GlcNAc...) asparagine) is linked at asparagine 351. Cysteines 363 and 382 form a disulfide. Residue asparagine 408 is glycosylated (N-linked (GlcNAc...) asparagine). 2 cysteine pairs are disulfide-bonded: cysteine 429/cysteine 456 and cysteine 483/cysteine 504. Over residues 547–558 the composition is skewed to polar residues; that stretch reads VEDSRQGNMPST. Positions 547-566 are disordered; it reads VEDSRQGNMPSTNKKETTAQ. The 241-residue stretch at 580–820 folds into the Peptidase S1 2 domain; sequence IYNSIAKVEE…FIDWIRQIMS (241 aa). Positions 584 to 1004 are cleaved as a propeptide — activation peptide; sequence IAKVEEAVPH…VVPDSDSSEP (421 aa). 4 disulfides stabilise this stretch: cysteine 609/cysteine 625, cysteine 706/cysteine 776, cysteine 737/cysteine 754, and cysteine 766/cysteine 796. An N-linked (GlcNAc...) asparagine glycan is attached at asparagine 763. An N-linked (GlcNAc...) asparagine glycan is attached at asparagine 940.

This sequence belongs to the peptidase S1 family. The catalytically inactive 110 kDa form is processed both N- and C-terminally to give rise to the 66 kDa catalytically active form. Specifically expressed in the pars recta oviduct.

The protein localises to the secreted. The catalysed reaction is Preferential cleavage at 371-Gly-Ser-Arg-|-Trp-374 of glycoprotein gp43 in Xenopus laevis coelemic egg envelope to yield gp41.. In terms of biological role, converts the glycoprotein envelope surrounding the egg from an unfertilizable to a fertilizable form during its transit through the pars recta portion of the oviduct by selectively hydrolyzing the envelope glycoprotein gp43. The egg envelope is converted to a sperm-penetrable form, via an increase in sperm binding. This is Ovochymase-2 (ovch2) from Xenopus laevis (African clawed frog).